A 607-amino-acid polypeptide reads, in one-letter code: UvrABC system protein C (607 aa).

Residues 15-94 enclose the GIY-YIG domain; it reads ENPGVYLMKN…IKRHRPYFNV (80 aa). Residues 204–239 enclose the UVR domain; it reads DQVLKLLIRLMNEASARLDYETAALRRDQIASIKEV.

Belongs to the UvrC family. Interacts with UvrB in an incision complex.

It localises to the cytoplasm. The UvrABC repair system catalyzes the recognition and processing of DNA lesions. UvrC both incises the 5' and 3' sides of the lesion. The N-terminal half is responsible for the 3' incision and the C-terminal half is responsible for the 5' incision. The protein is UvrABC system protein C of Dehalococcoides mccartyi (strain CBDB1).